The primary structure comprises 630 residues: Low affinity heme transporter str3 (630 aa).

Residues 1–26 (MEAKETHSISDHEVELQDAKPEEKSE) show a composition bias toward basic and acidic residues. Residues 1-51 (MEAKETHSISDHEVELQDAKPEEKSENGNFVFEKAFSSDEEKGSGYNTNET) are disordered. At 1 to 79 (MEAKETHSIS…VRDSIYQNKR (79 aa)) the chain is on the cytoplasmic side. S10 and S38 each carry phosphoserine. The chain crosses the membrane as a helical span at residues 80–100 (GMYLAYAFGIAILACSWASAI). Topologically, residues 101–120 (QSSTTYSYQVYATASFNRTS) are extracellular. A helical membrane pass occupies residues 121 to 141 (MISTLEIATAIISSVCKPILG). Over 142–154 (KFSDITSRPMTYT) the chain is Cytoplasmic. A helical transmembrane segment spans residues 155 to 175 (LVLLFYVIGFIVVASSSTISA). Residue Y176 is a topological domain, extracellular. Residues 177–197 (VIGSVFISIGSSGLDYLNTLV) traverse the membrane as a helical segment. At 198–208 (VGDLTSLKWRG) the chain is on the cytoplasmic side. A helical transmembrane segment spans residues 209–229 (FMTALLSTPYIATVWFTGFIV). The Extracellular segment spans residues 230–241 (QGIIDSNWRWGY). A helical membrane pass occupies residues 242–262 (GMFAIIMPAVMTPAVIILMYL). The Cytoplasmic portion of the chain corresponds to 263-302 (ERQANKDENIKKIINYQTEEKNKNKQSKWQKLWKAVLEVD). Residues 303 to 323 (LFGLILLGVGWSILLLPFSLT) form a helical membrane-spanning segment. Over 324–335 (SYAKNGWKNPSM) the chain is Extracellular. Residues 336–356 (IAMMVVGGVILIAYSGYEMFI) form a helical membrane-spanning segment. At 357 to 370 (APYPSCPRRVMNRT) the chain is on the cytoplasmic side. A helical transmembrane segment spans residues 371–391 (FITAVIIDFFYYLAGYLQSMY). At 392-406 (FTTYTWILYDWSYRD) the chain is on the extracellular side. A helical membrane pass occupies residues 407 to 427 (WTYFNNTMTIALCVFGVFAGA). At 428–439 (MHRVFHRYKYLQ) the chain is on the cytoplasmic side. A helical membrane pass occupies residues 440–460 (IIGLVIKIVGYGILIRPNFAA). Residues 461-465 (TGKVD) are Extracellular-facing. The helical transmembrane segment at 466 to 486 (LAWSLILIGMGGSFSVVGSQV) threads the bilayer. The Cytoplasmic segment spans residues 487–502 (SCQASVPHQDLAIASS). Residues 503–523 (LLPLYTNIGGAIGAAIASPIF) form a helical membrane-spanning segment. The tract at residues 522–576 (IFSNKVPKYLREYLPSSINDTQVYNFYSDSSLIREYPVGTEIRDGAIKAYSRSMF) is heme binding. The Extracellular portion of the chain corresponds to 524 to 574 (SNKVPKYLREYLPSSINDTQVYNFYSDSSLIREYPVGTEIRDGAIKAYSRS). The helical transmembrane segment at 575–595 (MFFLLVPAVSLSFIPLAAAFW) threads the bilayer. At 596–630 (QSNFYLGNQQNAVEGDQDHKKKGDKETTQEEKIII) the chain is on the cytoplasmic side. The tract at residues 610-630 (GDQDHKKKGDKETTQEEKIII) is disordered. Positions 611–630 (DQDHKKKGDKETTQEEKIII) are enriched in basic and acidic residues.

This sequence belongs to the major facilitator superfamily.

It localises to the cell membrane. Its function is as follows. Low affinity heme transporter involved in the assimilation of exogenous heme during conditions of low cellular iron. This chain is Low affinity heme transporter str3, found in Schizosaccharomyces pombe (strain 972 / ATCC 24843) (Fission yeast).